A 408-amino-acid chain; its full sequence is Multidrug resistance protein MdtG (408 aa).

The next 11 membrane-spanning stretches (helical) occupy residues 16 to 36 (LIVA…VMPF), 58 to 78 (IVFS…GGLA), 92 to 112 (LGMG…QFLI), 115 to 135 (ALLG…ATQV), 146 to 166 (TLST…GLLA), 173 to 193 (PVFF…LFCI), 224 to 244 (LFVT…ILTL), 256 to 276 (VAFI…LSAP), 290 to 310 (ILIT…YVQT), 319 to 339 (FLLG…LVYN), and 378 to 398 (AVFL…WNSL).

It belongs to the major facilitator superfamily. DHA1 family. MdtG (TC 2.A.1.2.20) subfamily.

The protein resides in the cell inner membrane. In terms of biological role, confers resistance to fosfomycin and deoxycholate. This is Multidrug resistance protein MdtG from Escherichia coli O127:H6 (strain E2348/69 / EPEC).